Here is a 166-residue protein sequence, read N- to C-terminus: Cyanate hydratase (166 aa).

Catalysis depends on residues arginine 92, glutamate 95, and serine 118.

The protein belongs to the cyanase family.

The enzyme catalyses cyanate + hydrogencarbonate + 3 H(+) = NH4(+) + 2 CO2. Catalyzes the reaction of cyanate with bicarbonate to produce ammonia and carbon dioxide. The chain is Cyanate hydratase from Zea mays (Maize).